The primary structure comprises 679 residues: Glycine--tRNA ligase beta subunit (679 aa).

Belongs to the class-II aminoacyl-tRNA synthetase family. As to quaternary structure, tetramer of two alpha and two beta subunits.

It localises to the cytoplasm. It catalyses the reaction tRNA(Gly) + glycine + ATP = glycyl-tRNA(Gly) + AMP + diphosphate. The sequence is that of Glycine--tRNA ligase beta subunit from Streptococcus pyogenes serotype M12 (strain MGAS9429).